A 242-amino-acid chain; its full sequence is Pyridoxine 5'-phosphate synthase (242 aa).

Asn6 provides a ligand contact to 3-amino-2-oxopropyl phosphate. Residue Asp8–His9 coordinates 1-deoxy-D-xylulose 5-phosphate. 3-amino-2-oxopropyl phosphate is bound at residue Arg17. Catalysis depends on His42, which acts as the Proton acceptor. Residues Arg44 and His49 each coordinate 1-deoxy-D-xylulose 5-phosphate. Glu69 functions as the Proton acceptor in the catalytic mechanism. Thr99 contributes to the 1-deoxy-D-xylulose 5-phosphate binding site. The active-site Proton donor is the His190. Residues Gly191 and Gly212–His213 contribute to the 3-amino-2-oxopropyl phosphate site.

The protein belongs to the PNP synthase family. As to quaternary structure, homooctamer; tetramer of dimers.

It localises to the cytoplasm. It catalyses the reaction 3-amino-2-oxopropyl phosphate + 1-deoxy-D-xylulose 5-phosphate = pyridoxine 5'-phosphate + phosphate + 2 H2O + H(+). It functions in the pathway cofactor biosynthesis; pyridoxine 5'-phosphate biosynthesis; pyridoxine 5'-phosphate from D-erythrose 4-phosphate: step 5/5. In terms of biological role, catalyzes the complicated ring closure reaction between the two acyclic compounds 1-deoxy-D-xylulose-5-phosphate (DXP) and 3-amino-2-oxopropyl phosphate (1-amino-acetone-3-phosphate or AAP) to form pyridoxine 5'-phosphate (PNP) and inorganic phosphate. This Neisseria meningitidis serogroup B (strain ATCC BAA-335 / MC58) protein is Pyridoxine 5'-phosphate synthase.